The following is a 589-amino-acid chain: PTS system mannitol-specific EIICB component (589 aa).

The Cytoplasmic portion of the chain corresponds to 1 to 25 (MERKSSLKVRVQKLGTSLSNMVMPN). In terms of domain architecture, PTS EIIC type-2 spans 14-347 (LGTSLSNMVM…ILKSDNSDDD (334 aa)). The chain crosses the membrane as a helical span at residues 26-47 (IGAFIAWGVAASLFIATGYLPN). Residues 48–51 (KALD) are Extracellular-facing. Residues 52 to 73 (TNVVGPMLKYVLPLLIGYTGGY) traverse the membrane as a helical segment. Over 74-136 (NIHKQRGGVI…TGFEMLVNNF (63 aa)) the chain is Cytoplasmic. The chain crosses the membrane as a helical span at residues 137–158 (SLGLIGFALMVLAFFVIGPVVA). Residues 159 to 167 (QLTEWVGIG) lie on the Extracellular side of the membrane. Residues 168–188 (VEAIVKVHLLPLANLIIEPAK) traverse the membrane as a helical segment. The Cytoplasmic segment spans residues 189–275 (ILFLNNALNH…VMMKPAMFLA (87 aa)). The helical transmembrane segment at 276–295 (VIAGGLTGTFTFQTLGAGLT) threads the bilayer. The Extracellular portion of the chain corresponds to 296–317 (APASPGSIIAIMGMSPKGWGPH). A helical transmembrane segment spans residues 318–339 (LVVLAGVFAAAVASFLVASIIL). At 340-589 (KSDNSDDDSL…YDKLVARMHK (250 aa)) the chain is on the cytoplasmic side. In terms of domain architecture, PTS EIIB type-2 spans 383 to 478 (HQIIFACDAG…SLTNGKASGS (96 aa)). Cys389 acts as the Phosphocysteine intermediate; for EIIB activity in catalysis. The residue at position 389 (Cys389) is a Phosphocysteine; by EIIA.

In terms of assembly, homodimer.

The protein localises to the cell membrane. It catalyses the reaction D-mannitol(out) + N(pros)-phospho-L-histidyl-[protein] = D-mannitol 1-phosphate(in) + L-histidyl-[protein]. In terms of biological role, the phosphoenolpyruvate-dependent sugar phosphotransferase system (sugar PTS), a major carbohydrate active transport system, catalyzes the phosphorylation of incoming sugar substrates concomitantly with their translocation across the cell membrane. The enzyme II CmtAB PTS system is involved in D-mannitol transport. In Streptococcus mutans serotype c (strain ATCC 700610 / UA159), this protein is PTS system mannitol-specific EIICB component.